We begin with the raw amino-acid sequence, 540 residues long: Phosphoenolpyruvate carboxykinase (ATP) (540 aa).

Arg65 contributes to the substrate binding site. An N6-acetyllysine modification is found at Lys87. Tyr207 and Lys213 together coordinate substrate. Residues Lys213, His232, and 248 to 256 (GLSGTGKTT) contribute to the ATP site. Residues Lys213 and His232 each contribute to the Mn(2+) site. Residue Asp269 coordinates Mn(2+). Residues Glu297, Arg333, 449–450 (RI), and Thr455 each bind ATP. Arg333 provides a ligand contact to substrate. Residue Lys523 is modified to N6-acetyllysine.

The protein belongs to the phosphoenolpyruvate carboxykinase (ATP) family. As to quaternary structure, monomer. It depends on Mn(2+) as a cofactor.

The protein localises to the cytoplasm. The catalysed reaction is oxaloacetate + ATP = phosphoenolpyruvate + ADP + CO2. It participates in carbohydrate biosynthesis; gluconeogenesis. Functionally, involved in the gluconeogenesis. Catalyzes the conversion of oxaloacetate (OAA) to phosphoenolpyruvate (PEP) through direct phosphoryl transfer between the nucleoside triphosphate and OAA. The protein is Phosphoenolpyruvate carboxykinase (ATP) of Escherichia fergusonii (strain ATCC 35469 / DSM 13698 / CCUG 18766 / IAM 14443 / JCM 21226 / LMG 7866 / NBRC 102419 / NCTC 12128 / CDC 0568-73).